The following is a 338-amino-acid chain: 4-hydroxythreonine-4-phosphate dehydrogenase (338 aa).

Substrate is bound by residues histidine 140 and threonine 141. A divalent metal cation contacts are provided by histidine 172, histidine 217, and histidine 271. 3 residues coordinate substrate: lysine 279, asparagine 288, and arginine 297.

The protein belongs to the PdxA family. As to quaternary structure, homodimer. A divalent metal cation serves as cofactor.

It is found in the cytoplasm. It carries out the reaction 4-(phosphooxy)-L-threonine + NAD(+) = 3-amino-2-oxopropyl phosphate + CO2 + NADH. It participates in cofactor biosynthesis; pyridoxine 5'-phosphate biosynthesis; pyridoxine 5'-phosphate from D-erythrose 4-phosphate: step 4/5. Functionally, catalyzes the NAD(P)-dependent oxidation of 4-(phosphooxy)-L-threonine (HTP) into 2-amino-3-oxo-4-(phosphooxy)butyric acid which spontaneously decarboxylates to form 3-amino-2-oxopropyl phosphate (AHAP). In Prosthecochloris aestuarii (strain DSM 271 / SK 413), this protein is 4-hydroxythreonine-4-phosphate dehydrogenase.